The following is an 833-amino-acid chain: Leucine--tRNA ligase (833 aa).

The short motif at 41 to 52 (PYPSGAGLHVGH) is the 'HIGH' region element. Residues 610-614 (KMSKS) carry the 'KMSKS' region motif. Lys613 provides a ligand contact to ATP.

Belongs to the class-I aminoacyl-tRNA synthetase family.

Its subcellular location is the cytoplasm. It carries out the reaction tRNA(Leu) + L-leucine + ATP = L-leucyl-tRNA(Leu) + AMP + diphosphate. The sequence is that of Leucine--tRNA ligase from Streptococcus equi subsp. zooepidemicus (strain H70).